The sequence spans 318 residues: Deoxymugineic acid synthase 1 (318 aa).

Position 48 (D48) interacts with NADP(+). Catalysis depends on Y53, which acts as the Proton donor. A substrate-binding site is contributed by H116. Residues 162-163 (CN), Q184, 262-270 (FDEARMREN), and 277-285 (ELTEEERQR) each bind NADP(+).

This sequence belongs to the aldo/keto reductase family. Confined to cells participating in long distance transport (e.g. in the parts of pericycle cells adjacent to the protoxylem and metaxylem) in roots and to vascular bundles in shoots.

The enzyme catalyses 2'-deoxymugineate + NAD(+) = 3''-deamino-3''-oxonicotianamine + NADH + H(+). It catalyses the reaction 2'-deoxymugineate + NADP(+) = 3''-deamino-3''-oxonicotianamine + NADPH + H(+). It participates in siderophore biosynthesis. Catalyzes the reduction of a 3''-keto intermediate during the biosynthesis of 2'-deoxymugineic acid (DMA) from L-Met. Involved in the formation of phytosiderophores (MAs) belonging to the mugineic acid family and required to acquire iron. The polypeptide is Deoxymugineic acid synthase 1 (Oryza sativa subsp. japonica (Rice)).